Here is a 427-residue protein sequence, read N- to C-terminus: Amino acid transporter AVT3A (427 aa).

The tract at residues 1-35 (MRYDQEAGSSSHSLPSGSSSHSLPPTEDTPLLGPR) is disordered. At 1 to 42 (MRYDQEAGSSSHSLPSGSSSHSLPPTEDTPLLGPRTLSSQPK) the chain is on the cytoplasmic side. Residues 8-24 (GSSSHSLPSGSSSHSLP) show a composition bias toward low complexity. Residues 43–63 (TFANVFIAIVGAGVLGLPYTF) form a helical membrane-spanning segment. Over 64–69 (KKTGWL) the chain is Vacuolar. The chain crosses the membrane as a helical span at residues 70–90 (LGLLTLLFVSSLTFFCMMLLV). Residues 91-122 (HTRRKLESLSGFNSITSFGDLGESVCGPAGRL) are Cytoplasmic-facing. Residues 123–143 (VVDVMLVLSQSGFCVSYLIFV) form a helical membrane-spanning segment. Residues 144–157 (ATTMANLLSRGTEH) are Vacuolar-facing. A helical transmembrane segment spans residues 158 to 178 (ILGLDAASIYLWGCFPFQLGL). Residues 179 to 186 (NSIPSLTH) lie on the Cytoplasmic side of the membrane. The helical transmembrane segment at 187-207 (LAPLSIFADIVDVAATLVVMV) threads the bilayer. Residues 208–227 (QDVFIFLKRRPPLRVFGGVS) are Vacuolar-facing. The helical transmembrane segment at 228-248 (VFFYGLGVAVYAFEGIGMVLP) threads the bilayer. Residues 249 to 262 (LELEAKYKDKFGRA) are Cytoplasmic-facing. A helical transmembrane segment spans residues 263–283 (LGLAMGLISIMYGAFGLLGYM). The Vacuolar portion of the chain corresponds to 284 to 300 (AYGEETKDIITTNLGTG). The helical transmembrane segment at 301–321 (VVSTLVQLGLAINLFFTFPLM) threads the bilayer. Residues 322-339 (MQPVYEVVERRLCSSRYS) are Cytoplasmic-facing. A helical membrane pass occupies residues 340–360 (VWVRWATVLVVTLVALLVPNF). The Vacuolar portion of the chain corresponds to 361–362 (AD). A helical transmembrane segment spans residues 363 to 383 (FLSLVGSSVCVVLGFVLPSLF). The Cytoplasmic portion of the chain corresponds to 384 to 396 (HLQAFKNELSITR). A helical transmembrane segment spans residues 397-417 (IVVDVLVFLIGVMIAITGTWT). At 418 to 427 (AVHEILTSKA) the chain is on the vacuolar side.

The protein belongs to the amino acid/polyamine transporter 2 family. Amino acid/auxin permease (AAAP) (TC 2.A.18.8) subfamily. In terms of tissue distribution, ubiquitous.

The protein resides in the vacuole membrane. In terms of biological role, translocates preferentially neutral amino acids and to a lesser extent aromatic amino acids from the vacuole to the cytoplasm. Requires ATP for function. The protein is Amino acid transporter AVT3A of Arabidopsis thaliana (Mouse-ear cress).